A 960-amino-acid polypeptide reads, in one-letter code: Dynamin-like GTPase OPA1, mitochondrial (960 aa).

The N-terminal 87 residues, 1–87, are a transit peptide targeting the mitochondrion; it reads MWRLRRAAVA…IKYGYQPRRN (87 aa). Over 88–96 the chain is Mitochondrial matrix; it reads FWPARLATR. A helical transmembrane segment spans residues 97–113; it reads LLKLRYLILGSAVGGGY. The Mitochondrial intermembrane portion of the chain corresponds to 114 to 770; the sequence is TAKKTFDQWK…NAIENMVGPD (657 aa). 2 consecutive short sequence motifs (LQQQIQ motif) follow at residues 181–186 and 217–222; these read DFFTSG and QLQEEL. Positions 210–254 form a coiled coil; sequence SDKEKIDQLQEELLHTQLKYQRILERLEKENKELRKLVLQKDDKG. The residue at position 228 (lysine 228) is an N6-acetyllysine. The LQQQIQ motif signature appears at 235 to 240; the sequence is RLEKEN. One can recognise a Dynamin-type G domain in the interval 285 to 561; that stretch reads QDHLPRVVVV…FWKMVRESVE (277 aa). The segment at 295–302 is G1 motif; that stretch reads GDQSAGKT. The GTP site is built by serine 298, glycine 300, lysine 301, threonine 302, serine 303, and glycine 317. Threonine 302 lines the Mg(2+) pocket. Residues 321–324 are G2 motif; it reads MMTR. Threonine 323 and aspartate 398 together coordinate Mg(2+). Residues 398-401 form a G3 motif region; it reads DLPG. A G4 motif region spans residues 467–470; the sequence is TKVD. Residues lysine 468, aspartate 470, threonine 503, glycine 506, and asparagine 507 each contribute to the GTP site. A G5 motif region spans residues 501–504; it reads VVTG. Stalk region regions lie at residues 589–836 and 874–928; these read DRNE…IKDT and CNDV…IKLL. The interval 736–856 is paddle region; the sequence is SDKQQWDAAI…KTALNHCNLC (121 aa). Residues 771 to 781 lie within the membrane without spanning it; the sequence is WKKRWLYWKNR. The Mitochondrial intermembrane portion of the chain corresponds to 782–960; it reads TQEQCVHNET…AFIEALHQEK (179 aa). Cysteine 856 and cysteine 874 are joined by a disulfide. Residues 895 to 960 are a coiled coil; the sequence is RQQLTNTEVR…AFIEALHQEK (66 aa).

Belongs to the TRAFAC class dynamin-like GTPase superfamily. Dynamin/Fzo/YdjA family. As to quaternary structure, oligomeric complex consisting of membrane-bound and soluble forms of OPA1. Interacts with RCC1L; RCC1L acts as a guanine nucleotide exchange factor (GEF) for OPA1 by exchanging bound GDP for free GTP. Interacts with CHCHD3 and IMMT; these interactions occur preferentially with soluble OPA1 forms. Interacts with PRELID1. Cleaved by OMA1 or YME1L downstream of the transmembrane region in response to different signals to generate soluble forms. Cleaved by OMA1 at position S1 following stress conditions, generating the short soluble form (Dynamin-like GTPase OPA1, short form; S-OPA1). AFG3L2 is involved in the regulation of OMA1-dependent processing of OPA1. PARL-dependent proteolytic processing releases an antiapoptotic soluble form not required for mitochondrial fusion. In terms of processing, cleavage at position S2 by YME1L is required to mediate oxidative phosphorylation (OXPHOS)-induced mitochondrial fusion. Cleavage occurs in the sequence motif Leu-Gln-Gln-Gln-Ile-Gln (LQQQIQ). Post-translationally, cleavage at position S2 by YME1L is required to mediate oxidative phosphorylation (OXPHOS)-induced mitochondrial fusion. Cleavage occurs in the sequence motif Leu-Gln-Gln-Gln-Ile-Gln (LQQQIQ). Cleavage at position S3 by YME1L is required for membrane tubulation. Cleavage at position S3 by YME1L is required for membrane tubulation. In terms of tissue distribution, highly expressed in retina. Also expressed in brain, testis, heart and skeletal muscle. Low levels of all isoforms expressed in a variety of tissues. Expressed in retina, skeletal muscle, heart, lung, ovary, colon, thyroid gland, leukocytes and fetal brain. Low levels of all isoforms expressed in a variety of tissues. As to expression, isoform 2 expressed in colon, liver, kidney, thyroid gland and leukocytes.

The protein localises to the mitochondrion inner membrane. The protein resides in the mitochondrion intermembrane space. It carries out the reaction GTP + H2O = GDP + phosphate + H(+). Its activity is regulated as follows. Activated by guanine nucleotide exchange factor RCC1L. In terms of biological role, dynamin-related GTPase that is essential for normal mitochondrial morphology by mediating fusion of the mitochondrial inner membranes, regulating cristae morphology and maintaining respiratory chain function. Exists in two forms: the transmembrane, long form (Dynamin-like GTPase OPA1, long form; L-OPA1), which is tethered to the inner mitochondrial membrane, and the short soluble form (Dynamin-like GTPase OPA1, short form; S-OPA1), which results from proteolytic cleavage and localizes in the intermembrane space. Both forms (L-OPA1 and S-OPA1) cooperate to catalyze the fusion of the mitochondrial inner membrane. The equilibrium between L-OPA1 and S-OPA1 is essential: excess levels of S-OPA1, produced by cleavage by OMA1 following loss of mitochondrial membrane potential, lead to an impaired equilibrium between L-OPA1 and S-OPA1, inhibiting mitochondrial fusion. The balance between L-OPA1 and S-OPA1 also influences cristae shape and morphology. Involved in remodeling cristae and the release of cytochrome c during apoptosis. Proteolytic processing by PARL in response to intrinsic apoptotic signals may lead to disassembly of OPA1 oligomers and release of the caspase activator cytochrome C (CYCS) into the mitochondrial intermembrane space. Acts as a regulator of T-helper Th17 cells, which are characterized by cells with fused mitochondria with tight cristae, by mediating mitochondrial membrane remodeling: OPA1 is required for interleukin-17 (IL-17) production. Its role in mitochondrial morphology is required for mitochondrial genome maintenance. Its function is as follows. Constitutes the transmembrane long form (L-OPA1) that plays a central role in mitochondrial inner membrane fusion and cristae morphology. L-OPA1 and the soluble short form (S-OPA1) form higher-order helical assemblies that coordinate the fusion of mitochondrial inner membranes. Inner membrane-anchored L-OPA1 molecules initiate membrane remodeling by recruiting soluble S-OPA1 to rapidly polymerize into a flexible cylindrical scaffold encaging the mitochondrial inner membrane. Once at the membrane surface, the formation of S-OPA1 helices induce bilayer curvature. OPA1 dimerization through the paddle region, which inserts into cardiolipin-containing membrane, promotes GTP hydrolysis and the helical assembly of a flexible OPA1 lattice on the membrane, which drives membrane curvature and mitochondrial fusion. Plays a role in the maintenance and remodeling of mitochondrial cristae, some invaginations of the mitochondrial inner membrane that provide an increase in the surface area. Probably acts by forming helical filaments at the inside of inner membrane tubes with the shape and dimensions of crista junctions. The equilibrium between L-OPA1 and S-OPA1 influences cristae shape and morphology: increased L-OPA1 levels promote cristae stacking and elongated mitochondria, while increased S-OPA1 levels correlated with irregular cristae packing and round mitochondria shape. Functionally, constitutes the soluble short form (S-OPA1) generated by cleavage by OMA1, which plays a central role in mitochondrial inner membrane fusion and cristae morphology. The transmembrane long form (L-OPA1) and the S-OPA1 form higher-order helical assemblies that coordinate the fusion of mitochondrial inner membranes. Inner membrane-anchored L-OPA1 molecules initiate membrane remodeling by recruiting soluble S-OPA1 to rapidly polymerize into a flexible cylindrical scaffold encaging the mitochondrial inner membrane. Once at the membrane surface, the formation of S-OPA1 helices induce bilayer curvature. OPA1 dimerization through the paddle region, which inserts into cardiolipin-containing membrane, promotes GTP hydrolysis and the helical assembly of a flexible OPA1 lattice on the membrane, which drives membrane curvature and mitochondrial fusion. Excess levels of S-OPA1 produced by cleavage by OMA1 following stress conditions that induce loss of mitochondrial membrane potential, lead to an impaired equilibrium between L-OPA1 and S-OPA1, thereby inhibiting mitochondrial fusion. Involved in mitochondrial safeguard in response to transient mitochondrial membrane depolarization by mediating flickering: cleavage by OMA1 leads to excess production of S-OPA1, preventing mitochondrial hyperfusion. Plays a role in the maintenance and remodeling of mitochondrial cristae, some invaginations of the mitochondrial inner membrane that provide an increase in the surface area. Probably acts by forming helical filaments at the inside of inner membrane tubes with the shape and dimensions of crista junctions. The equilibrium between L-OPA1 and S-OPA1 influences cristae shape and morphology: increased L-OPA1 levels promote cristae stacking and elongated mitochondria, while increased S-OPA1 levels correlated with irregular cristae packing and round mitochondria shape. Coexpression of isoform 1 with shorter alternative products is required for optimal activity in promoting mitochondrial fusion. In terms of biological role, isoforms that contain the alternative exon 4b are required for mitochondrial genome maintenance, possibly by anchoring the mitochondrial nucleoids to the inner mitochondrial membrane. The sequence is that of Dynamin-like GTPase OPA1, mitochondrial from Homo sapiens (Human).